A 25-amino-acid polypeptide reads, in one-letter code: Small ribosomal subunit protein uS19 (25 aa).

The segment at 1–25 is disordered; that stretch reads GHKLGEFAPTRTFRGHKKEDKKVKR.

This sequence belongs to the universal ribosomal protein uS19 family.

Its function is as follows. Protein S19 forms a complex with S13 that binds strongly to the 16S ribosomal RNA. In Acholeplasma laidlawii, this protein is Small ribosomal subunit protein uS19 (rpsS).